The chain runs to 378 residues: Chaperone protein DnaJ (378 aa).

The 65-residue stretch at 3-67 (DFYDTLGVNR…EKRARYDQFG (65 aa)) folds into the J domain. The CR-type zinc finger occupies 132–214 (GQEREIKIPH…CGGQGVKQVR (83 aa)). Positions 145, 148, 162, 165, 188, 191, 202, and 205 each coordinate Zn(2+). 4 CXXCXGXG motif repeats span residues 145–152 (CDVCRGTG), 162–169 (CSTCGGAG), 188–195 (CPTCSGSG), and 202–209 (CQSCGGQG).

Belongs to the DnaJ family. In terms of assembly, homodimer. Zn(2+) is required as a cofactor.

The protein resides in the cytoplasm. Its function is as follows. Participates actively in the response to hyperosmotic and heat shock by preventing the aggregation of stress-denatured proteins and by disaggregating proteins, also in an autonomous, DnaK-independent fashion. Unfolded proteins bind initially to DnaJ; upon interaction with the DnaJ-bound protein, DnaK hydrolyzes its bound ATP, resulting in the formation of a stable complex. GrpE releases ADP from DnaK; ATP binding to DnaK triggers the release of the substrate protein, thus completing the reaction cycle. Several rounds of ATP-dependent interactions between DnaJ, DnaK and GrpE are required for fully efficient folding. Also involved, together with DnaK and GrpE, in the DNA replication of plasmids through activation of initiation proteins. The protein is Chaperone protein DnaJ of Prochlorococcus marinus (strain SARG / CCMP1375 / SS120).